Reading from the N-terminus, the 178-residue chain is Cell division protein ZapC (178 aa).

Belongs to the ZapC family. As to quaternary structure, interacts directly with FtsZ.

Its subcellular location is the cytoplasm. In terms of biological role, contributes to the efficiency of the cell division process by stabilizing the polymeric form of the cell division protein FtsZ. Acts by promoting interactions between FtsZ protofilaments and suppressing the GTPase activity of FtsZ. In Pseudoalteromonas atlantica (strain T6c / ATCC BAA-1087), this protein is Cell division protein ZapC.